The following is a 518-amino-acid chain: Cytochrome P450 monooxygenase atnE (518 aa).

The chain crosses the membrane as a helical span at residues Phe-11–Val-31. Residue Asn-184 is glycosylated (N-linked (GlcNAc...) asparagine). A heme-binding site is contributed by Cys-458.

The protein belongs to the cytochrome P450 family. Heme is required as a cofactor.

It is found in the membrane. It participates in secondary metabolite biosynthesis. In terms of biological role, cytochrome P450 monooxygenase; part of the gene cluster that mediates the biosynthesis of aspercryptins, linear lipopeptides built from six amino acids including 2 highly unusual and nonproteogenic amino acids, 2-amino-octanoic acid (2aoa) and 2-amino-dodecanol (2adol). The core structure of aspercryptins is as follows: Ser/Ala-Thr-Ile/Val-2aoa-Asn-2adol. The first step of aspercryptin biosynthesis is the generation of the fatty acid precursors, octanoic and dodecanoic acids, by the FAS subunits atnF and atnM. The fatty acid precursors are likely transformed into the corresponding alpha-amino fatty acids in three steps. First, they are hydroxylated by the cytochrome P450 monooxygenase atnE, then oxidized to the corresponding alpha-keto acids by the NAD(P)-dependent oxidoreductase atnD, and finally converted to the alpha-amino fatty acids by the PLP-dependent aminotransferases atnH or atnJ. the alpha-amino fatty acids, 2-amino-octanoic and 2-amino-dodecanoic acids, are recognized, activated, and covalently tethered to the NRPS atnA by its fourth and sixth adenylation domains. The second module of atnA is the Thr module and contains an epimerase (E) domain responsible for the epimerization of Thr to D-allo-Thr. Additionally, despite atnA having only one epimerase domain, the first amino acid of aspercryptin A1 is D-Ser, suggesting that serine is either loaded directly as D-Ser on the first module or that the epimerase domain in the threonine module epimerizes both L-Ser and L-Thr. After condensation of the hexapeptide of aspercryptin, the C-terminal reductase (TE) domain might be involved in the reductive release and production of the aldehyde hexapeptide. Further reduction would generate aspercryptins. The variety of aspercryptins produced reflects the flexibility of the atnA NRPS, allowing incorporation of alanine instead of serine, valine for isoleucine, and a C10 fatty amino alcohol instead of the C12 version. AtnB seems to be involved in the selectivity for Ile versus Val by the third module. Moreover, type B, C and D aspercryptins have an additional N-terminal cichorine, acetyl and propionyl group respectively. The chain is Cytochrome P450 monooxygenase atnE from Emericella nidulans (strain FGSC A4 / ATCC 38163 / CBS 112.46 / NRRL 194 / M139) (Aspergillus nidulans).